The chain runs to 104 residues: Thioredoxin (104 aa).

The 103-residue stretch at 2–104 (KQVSDASFEE…KLFEWVEASV (103 aa)) folds into the Thioredoxin domain. An intrachain disulfide couples cysteine 29 to cysteine 32.

This sequence belongs to the thioredoxin family.

Its function is as follows. Participates in various redox reactions through the reversible oxidation of its active center dithiol to a disulfide and catalyzes dithiol-disulfide exchange reactions. This is Thioredoxin (trxA) from Rhodospirillum rubrum.